We begin with the raw amino-acid sequence, 212 residues long: Prolactin-3C1 (212 aa).

The signal sequence occupies residues 1 to 29; sequence MQLSLTQARTWKGLFLLVSCMFLWVYVTA. Cys80 and Cys188 are disulfide-bonded. Asn100 carries an N-linked (GlcNAc...) asparagine glycan.

The protein belongs to the somatotropin/prolactin family. In terms of tissue distribution, expressed exclusively in decidua.

The protein localises to the secreted. The polypeptide is Prolactin-3C1 (Prl3c1) (Mus musculus (Mouse)).